The sequence spans 418 residues: Transcription termination factor Rho (418 aa).

A Rho RNA-BD domain is found at 48-123 (SIFGEGTLEV…VKVDKVNGEA (76 aa)). ATP is bound by residues 169 to 174 (GKGQRA), 181 to 186 (KSGKTV), and Arg212.

This sequence belongs to the Rho family. Homohexamer. The homohexamer assembles into an open ring structure.

Its function is as follows. Facilitates transcription termination by a mechanism that involves Rho binding to the nascent RNA, activation of Rho's RNA-dependent ATPase activity, and release of the mRNA from the DNA template. The chain is Transcription termination factor Rho from Chromobacterium violaceum (strain ATCC 12472 / DSM 30191 / JCM 1249 / CCUG 213 / NBRC 12614 / NCIMB 9131 / NCTC 9757 / MK).